The sequence spans 184 residues: Peptidoglycan-recognition protein SC2 (184 aa).

A signal peptide spans 1–20 (MANKALILLAVLFCAQAVLG). An N-acetylmuramoyl-L-alanine amidase domain is found at 45-169 (SYAVIHHTAG…RQVGSTECPG (125 aa)). Position 50 (H50) interacts with Zn(2+). A disulfide bridge links C57 with C63. Residues H159 and C167 each coordinate Zn(2+).

Belongs to the N-acetylmuramoyl-L-alanine amidase 2 family. The cofactor is Zn(2+). In terms of tissue distribution, constitutively expressed at high level in gut, in addition to the induced expression in fat body.

The protein resides in the secreted. It catalyses the reaction Hydrolyzes the link between N-acetylmuramoyl residues and L-amino acid residues in certain cell-wall glycopeptides.. Its function is as follows. N-acetylmuramyl-L-alanine amidase involved in innate immunity by degrading bacterial peptidoglycans (PGN). Probably plays a scavenger role by digesting biologically active PGN into biologically inactive fragments. Has no direct bacteriolytic activity. The polypeptide is Peptidoglycan-recognition protein SC2 (PGRP-SC2) (Drosophila melanogaster (Fruit fly)).